The sequence spans 189 residues: Lipid A acyltransferase PagP (189 aa).

Residues 1–24 form the signal peptide; that stretch reads MLRRFSLFSLGFLGWLLVSGNASA. Catalysis depends on residues His-61, Asp-104, and Ser-105.

It belongs to the lipid A palmitoyltransferase family. As to quaternary structure, homodimer.

It localises to the cell outer membrane. The catalysed reaction is a lipid A + a 1,2-diacyl-sn-glycero-3-phosphocholine = a hepta-acyl lipid A + a 2-acyl-sn-glycero-3-phosphocholine. It carries out the reaction a lipid IVA + a 1,2-diacyl-sn-glycero-3-phosphocholine = a lipid IVB + a 2-acyl-sn-glycero-3-phosphocholine. It catalyses the reaction a lipid IIA + a 1,2-diacyl-sn-glycero-3-phosphocholine = a lipid IIB + a 2-acyl-sn-glycero-3-phosphocholine. Its function is as follows. Transfers a fatty acid residue from the sn-1 position of a phospholipid to the N-linked hydroxyfatty acid chain on the proximal unit of lipid A or its precursors. The sequence is that of Lipid A acyltransferase PagP from Klebsiella pneumoniae subsp. pneumoniae (strain ATCC 700721 / MGH 78578).